A 483-amino-acid chain; its full sequence is MKFIIKLFPEITIKSQSVRLRFIKILTSNIRNILKHCDESVAVVRHWDHIEVRAGDEQHRPLVADALTLIPGIHHILAVEERPWQDMHDIYLQTLVMYRDRLVGKSFCVRVKRRGTHDFTSQDVERYVGGGLNQNVDNTRVKLTHPDETVLLEIDNDRLLLITERLEGLGGFPIGTQEDVLSLISGGFDSGVSSYMLMRRGCRVNYCFFNLGGAAHEIGVRQVAHHLWRRFGQSHKVRFVSLDFAPVVNEILAKVEDGQMGIVLKRMMVRAASAIAERYGIQALVTGEALGQVSSQTLTNLRLIDNASDTLILRPLISHDKEHIITLAHQIGTEEYAKTMPEYCGVISKSPTVRAVKSRIEQEEGQFDFAVLETAVAQAQVVDIRELVAEEGNAPVAEVETTAELGSGDVVLDIRSQDEQEGCPLTLANVAVQTLPFYKLGSHFGELDQSKLYLLYCDRGVMSRLQALYLREQGFQNVKVYRP.

The THUMP domain occupies 61–165 (PLVADALTLI…NDRLLLITER (105 aa)). ATP is bound by residues 183–184 (LI), Lys-265, Gly-287, and Gln-296. The cysteines at positions 344 and 457 are disulfide-linked. The region spanning 405–483 (LGSGDVVLDI…GFQNVKVYRP (79 aa)) is the Rhodanese domain. Cys-457 acts as the Cysteine persulfide intermediate in catalysis.

It belongs to the ThiI family.

It localises to the cytoplasm. The catalysed reaction is [ThiI sulfur-carrier protein]-S-sulfanyl-L-cysteine + a uridine in tRNA + 2 reduced [2Fe-2S]-[ferredoxin] + ATP + H(+) = [ThiI sulfur-carrier protein]-L-cysteine + a 4-thiouridine in tRNA + 2 oxidized [2Fe-2S]-[ferredoxin] + AMP + diphosphate. It carries out the reaction [ThiS sulfur-carrier protein]-C-terminal Gly-Gly-AMP + S-sulfanyl-L-cysteinyl-[cysteine desulfurase] + AH2 = [ThiS sulfur-carrier protein]-C-terminal-Gly-aminoethanethioate + L-cysteinyl-[cysteine desulfurase] + A + AMP + 2 H(+). The protein operates within cofactor biosynthesis; thiamine diphosphate biosynthesis. In terms of biological role, catalyzes the ATP-dependent transfer of a sulfur to tRNA to produce 4-thiouridine in position 8 of tRNAs, which functions as a near-UV photosensor. Also catalyzes the transfer of sulfur to the sulfur carrier protein ThiS, forming ThiS-thiocarboxylate. This is a step in the synthesis of thiazole, in the thiamine biosynthesis pathway. The sulfur is donated as persulfide by IscS. The protein is tRNA sulfurtransferase of Sodalis glossinidius (strain morsitans).